The primary structure comprises 280 residues: NAD-capped RNA hydrolase NudC (280 aa).

Arginine 83 contacts substrate. Cysteine 113, cysteine 116, cysteine 131, and cysteine 134 together coordinate Zn(2+). Tyrosine 139 is a binding site for substrate. Positions 140 to 268 constitute a Nudix hydrolase domain; the sequence is PRVAPAIIVL…ASRRLLDDAL (129 aa). 3 residues coordinate a divalent metal cation: alanine 177, glutamate 193, and glutamate 197. A Nudix box motif is present at residues 178-199; it reads GFVEPSETLEAAVHREVGEEVG. Substrate is bound at residue 211–218; it reads QPWPFPHS. Glutamate 238 provides a ligand contact to a divalent metal cation.

This sequence belongs to the Nudix hydrolase family. NudC subfamily. In terms of assembly, homodimer. It depends on Mg(2+) as a cofactor. Requires Mn(2+) as cofactor. Zn(2+) serves as cofactor.

The catalysed reaction is a 5'-end NAD(+)-phospho-ribonucleoside in mRNA + H2O = a 5'-end phospho-adenosine-phospho-ribonucleoside in mRNA + beta-nicotinamide D-ribonucleotide + 2 H(+). It carries out the reaction NAD(+) + H2O = beta-nicotinamide D-ribonucleotide + AMP + 2 H(+). It catalyses the reaction NADH + H2O = reduced beta-nicotinamide D-ribonucleotide + AMP + 2 H(+). In terms of biological role, mRNA decapping enzyme that specifically removes the nicotinamide adenine dinucleotide (NAD) cap from a subset of mRNAs by hydrolyzing the diphosphate linkage to produce nicotinamide mononucleotide (NMN) and 5' monophosphate mRNA. The NAD-cap is present at the 5'-end of some mRNAs and stabilizes RNA against 5'-processing. Has preference for mRNAs with a 5'-end purine. Catalyzes the hydrolysis of a broad range of dinucleotide pyrophosphates. This Deinococcus radiodurans (strain ATCC 13939 / DSM 20539 / JCM 16871 / CCUG 27074 / LMG 4051 / NBRC 15346 / NCIMB 9279 / VKM B-1422 / R1) protein is NAD-capped RNA hydrolase NudC.